Consider the following 470-residue polypeptide: Cyclin-B1-3 (470 aa).

This sequence belongs to the cyclin family. Cyclin AB subfamily.

The chain is Cyclin-B1-3 (CYCB1-3) from Oryza sativa subsp. japonica (Rice).